Reading from the N-terminus, the 57-residue chain is DNA-directed RNA polymerase subunit Rpo6 (57 aa).

The protein belongs to the archaeal Rpo6/eukaryotic RPB6 RNA polymerase subunit family. As to quaternary structure, part of the RNA polymerase complex.

It localises to the cytoplasm. It carries out the reaction RNA(n) + a ribonucleoside 5'-triphosphate = RNA(n+1) + diphosphate. DNA-dependent RNA polymerase (RNAP) catalyzes the transcription of DNA into RNA using the four ribonucleoside triphosphates as substrates. The polypeptide is DNA-directed RNA polymerase subunit Rpo6 (Pyrococcus furiosus (strain ATCC 43587 / DSM 3638 / JCM 8422 / Vc1)).